The primary structure comprises 538 residues: Phosphoenolpyruvate carboxykinase (ATP) (538 aa).

Positions 61, 195, and 201 each coordinate substrate. Residues lysine 201, histidine 220, and 236-244 each bind ATP; that span reads GLSGTGKTT. Mn(2+) contacts are provided by lysine 201 and histidine 220. Mn(2+) is bound at residue aspartate 257. ATP-binding residues include glutamate 285, arginine 323, and threonine 449. Residue arginine 323 participates in substrate binding.

The protein belongs to the phosphoenolpyruvate carboxykinase (ATP) family. The cofactor is Mn(2+).

Its subcellular location is the cytoplasm. The enzyme catalyses oxaloacetate + ATP = phosphoenolpyruvate + ADP + CO2. Its pathway is carbohydrate biosynthesis; gluconeogenesis. Involved in the gluconeogenesis. Catalyzes the conversion of oxaloacetate (OAA) to phosphoenolpyruvate (PEP) through direct phosphoryl transfer between the nucleoside triphosphate and OAA. The chain is Phosphoenolpyruvate carboxykinase (ATP) from Bradyrhizobium diazoefficiens (strain JCM 10833 / BCRC 13528 / IAM 13628 / NBRC 14792 / USDA 110).